A 233-amino-acid chain; its full sequence is Large ribosomal subunit protein uL1 (233 aa).

This sequence belongs to the universal ribosomal protein uL1 family. As to quaternary structure, part of the 50S ribosomal subunit.

Functionally, binds directly to 23S rRNA. The L1 stalk is quite mobile in the ribosome, and is involved in E site tRNA release. Its function is as follows. Protein L1 is also a translational repressor protein, it controls the translation of the L11 operon by binding to its mRNA. This Rhizobium etli (strain CIAT 652) protein is Large ribosomal subunit protein uL1.